The following is a 161-amino-acid chain: Nucleotide-binding protein Pfl01_4421 (161 aa).

It belongs to the YajQ family.

Functionally, nucleotide-binding protein. In Pseudomonas fluorescens (strain Pf0-1), this protein is Nucleotide-binding protein Pfl01_4421.